Consider the following 253-residue polypeptide: 5'/3'-nucleotidase SurE (253 aa).

Residues Asp-8, Asp-9, Ser-39, and Asn-92 each coordinate a divalent metal cation.

Belongs to the SurE nucleotidase family. The cofactor is a divalent metal cation.

The protein resides in the cytoplasm. The enzyme catalyses a ribonucleoside 5'-phosphate + H2O = a ribonucleoside + phosphate. It carries out the reaction a ribonucleoside 3'-phosphate + H2O = a ribonucleoside + phosphate. It catalyses the reaction [phosphate](n) + H2O = [phosphate](n-1) + phosphate + H(+). Functionally, nucleotidase with a broad substrate specificity as it can dephosphorylate various ribo- and deoxyribonucleoside 5'-monophosphates and ribonucleoside 3'-monophosphates with highest affinity to 3'-AMP. Also hydrolyzes polyphosphate (exopolyphosphatase activity) with the preference for short-chain-length substrates (P20-25). Might be involved in the regulation of dNTP and NTP pools, and in the turnover of 3'-mononucleotides produced by numerous intracellular RNases (T1, T2, and F) during the degradation of various RNAs. This Klebsiella pneumoniae (strain 342) protein is 5'/3'-nucleotidase SurE.